Here is a 97-residue protein sequence, read N- to C-terminus: YcgL domain-containing protein PA14_47450 (97 aa).

A YcgL domain is found at 3–87; it reads RICSVYKSPR…GEEEYIEHLP (85 aa).

In Pseudomonas aeruginosa (strain UCBPP-PA14), this protein is YcgL domain-containing protein PA14_47450.